The following is a 354-amino-acid chain: Selenide, water dikinase (354 aa).

Cys23 is an active-site residue. ATP is bound by residues Lys26 and 54-56 (TSD). Residue Asp57 participates in Mg(2+) binding. ATP contacts are provided by residues Asp74, Asp97, and 145 to 147 (GHS). Position 97 (Asp97) interacts with Mg(2+). Asp233 is a binding site for Mg(2+).

This sequence belongs to the selenophosphate synthase 1 family. Class I subfamily. Homodimer. Requires Mg(2+) as cofactor.

It carries out the reaction hydrogenselenide + ATP + H2O = selenophosphate + AMP + phosphate + 2 H(+). Its function is as follows. Synthesizes selenophosphate from selenide and ATP. The protein is Selenide, water dikinase of Burkholderia orbicola (strain MC0-3).